Here is a 233-residue protein sequence, read N- to C-terminus: Biosynthetic peptidoglycan transglycosylase (233 aa).

Residues 17–37 form a helical membrane-spanning segment; sequence IVLAVLALVVLPYVLIFFYLL.

It belongs to the glycosyltransferase 51 family.

The protein resides in the cell inner membrane. The enzyme catalyses [GlcNAc-(1-&gt;4)-Mur2Ac(oyl-L-Ala-gamma-D-Glu-L-Lys-D-Ala-D-Ala)](n)-di-trans,octa-cis-undecaprenyl diphosphate + beta-D-GlcNAc-(1-&gt;4)-Mur2Ac(oyl-L-Ala-gamma-D-Glu-L-Lys-D-Ala-D-Ala)-di-trans,octa-cis-undecaprenyl diphosphate = [GlcNAc-(1-&gt;4)-Mur2Ac(oyl-L-Ala-gamma-D-Glu-L-Lys-D-Ala-D-Ala)](n+1)-di-trans,octa-cis-undecaprenyl diphosphate + di-trans,octa-cis-undecaprenyl diphosphate + H(+). It participates in cell wall biogenesis; peptidoglycan biosynthesis. Peptidoglycan polymerase that catalyzes glycan chain elongation from lipid-linked precursors. This chain is Biosynthetic peptidoglycan transglycosylase, found in Rhizobium etli (strain ATCC 51251 / DSM 11541 / JCM 21823 / NBRC 15573 / CFN 42).